We begin with the raw amino-acid sequence, 89 residues long: Small ribosomal subunit protein uS15 (89 aa).

The span at 1–11 (MSIAAERKAEV) shows a compositional bias: basic and acidic residues. The interval 1–24 (MSIAAERKAEVIKTNATKAGDTGS) is disordered.

The protein belongs to the universal ribosomal protein uS15 family. As to quaternary structure, part of the 30S ribosomal subunit. Forms a bridge to the 50S subunit in the 70S ribosome, contacting the 23S rRNA.

Functionally, one of the primary rRNA binding proteins, it binds directly to 16S rRNA where it helps nucleate assembly of the platform of the 30S subunit by binding and bridging several RNA helices of the 16S rRNA. In terms of biological role, forms an intersubunit bridge (bridge B4) with the 23S rRNA of the 50S subunit in the ribosome. This is Small ribosomal subunit protein uS15 from Bradyrhizobium diazoefficiens (strain JCM 10833 / BCRC 13528 / IAM 13628 / NBRC 14792 / USDA 110).